The chain runs to 601 residues: Protein FAM13C (601 aa).

Disordered stretches follow at residues 82–134 (SMGN…PQSS) and 192–238 (DGQV…EDLQ). Over residues 98 to 111 (ESGRNHGESQETEH) the composition is skewed to basic and acidic residues. Serine 130 is modified (phosphoserine). The segment covering 200–217 (DPAPASTQSAPADSADPA) has biased composition (low complexity). A Phosphoserine modification is found at serine 258. Disordered regions lie at residues 268–304 (QRFNLDPESAPSPPSSQQFMMPRSSSRCGSGDGKEPQ), 327–352 (FEQEKKYRPSHGDKTSNPEVLKWMND), and 366–485 (KLSE…DPVS). The segment covering 282–294 (SSQQFMMPRSSSR) has biased composition (low complexity). The segment covering 327-342 (FEQEKKYRPSHGDKTS) has biased composition (basic and acidic residues). Serine 405 and serine 406 each carry phosphoserine. Residues 415-446 (VPEKREQTPPQDDGKGTKQDKNLIKPLYDRCR) show a composition bias toward basic and acidic residues. Residues 462-471 (QEEEDSDEDC) are compositionally biased toward acidic residues.

Belongs to the FAM13 family.

This Mus musculus (Mouse) protein is Protein FAM13C (Fam13c).